A 255-amino-acid chain; its full sequence is Ribonuclease HII (255 aa).

Residues 70 to 255 (EYIAGVDEVG…FEPVKKILLK (186 aa)) enclose the RNase H type-2 domain. Residues aspartate 76, glutamate 77, and aspartate 168 each contribute to the a divalent metal cation site.

The protein belongs to the RNase HII family. Mn(2+) is required as a cofactor. Mg(2+) serves as cofactor.

The protein localises to the cytoplasm. The enzyme catalyses Endonucleolytic cleavage to 5'-phosphomonoester.. Functionally, endonuclease that specifically degrades the RNA of RNA-DNA hybrids. This Ligilactobacillus salivarius (strain UCC118) (Lactobacillus salivarius) protein is Ribonuclease HII.